The following is a 336-amino-acid chain: Potassium channel subfamily K member 1 (336 aa).

Over 1-20 the chain is Cytoplasmic; that stretch reads MLQSLAGSSCVRLVERHRSA. The chain crosses the membrane as a helical span at residues 21–41; it reads RCFGFLVLGYLLYLVFGAVVF. The Extracellular portion of the chain corresponds to 42 to 103; sequence SSVELPYEDL…SNASGNWNWD (62 aa). N95 carries an N-linked (GlcNAc...) asparagine glycan. An intramembrane region (helical) is located at residues 104–116; sequence FTSALFFASTVLS. The stretch at 117–122 is an intramembrane region; sequence TTGYGH. Positions 117 to 122 are selectivity filter 1; that stretch reads TTGYGH. At 123 to 132 the chain is on the extracellular side; the sequence is TVPLSDGGKA. Residues 133 to 156 traverse the membrane as a helical segment; it reads FCIIYSVIGIPFTLLFLTAVVQRI. Over 157-181 the chain is Cytoplasmic; the sequence is TVHVTRRPVLYFHIRWGFSKQVVAI. A helical membrane pass occupies residues 182–202; that stretch reads VHAVLLGFVTVSCFFFIPAAV. Residues 203–211 lie on the Extracellular side of the membrane; that stretch reads FSVLEDDWN. Residues 212–224 constitute an intramembrane region (helical); sequence FLESFYFCFISLS. A selectivity filter 2 region spans residues 225-230; that stretch reads TIGLGD. An intramembrane segment occupies 225–231; that stretch reads TIGLGDY. The Extracellular segment spans residues 232–243; the sequence is VPGEGYNQKFRE. Residues 244-267 traverse the membrane as a helical segment; it reads LYKIGITCYLLLGLIAMLVVLETF. The Cytoplasmic segment spans residues 268 to 336; sequence CELHELKKFR…SACMDGPANH (69 aa). K274 is covalently cross-linked (Glycyl lysine isopeptide (Lys-Gly) (interchain with G-Cter in SUMO)). Residues 293 to 299 form an important for intracellular retention in recycling endosomes region; that stretch reads IIEHDQL. The disordered stretch occupies residues 315-336; the sequence is QKQNEPFVATQSSACMDGPANH. At S326 the chain carries Phosphoserine.

The protein belongs to the two pore domain potassium channel (TC 1.A.1.8) family. Homodimer; disulfide-linked. Heterodimer with KCNK2; disulfide-linked. In astrocytes, forms mostly heterodimeric potassium channels with KCNK2, with only a minor proportion of functional channels containing homodimeric KCNK1. Interacts with KCNK3 and KCNK9, forming functional heterodimeric channels. Interacts with GNG4. Identified in a complex with PSD and ARF6; interacts only with PSD that is bound to ARF6. Interacts with UBE2I. Sumoylation is controversial. Sumoylated by UBE2I. Not sumoylated when expressed in xenopus oocytes or mammalian cells. Sumoylation inactivates the channel, but does not interfere with expression at the cell membrane. Sumoylation of a single subunit is sufficient to silence the dimeric channel. Sumoylation of KCNK1 is sufficient to silence heterodimeric channels formed by KCNK1 and KCNK3 or KCNK9. Desumoylated by SENP1; this activates the channel. Desumoylated by SENP1; this strongly increases halothane-mediated activation of heterodimeric channels formed with KCNK9. SENP1 treatment has no effect.

The protein localises to the cell membrane. It localises to the recycling endosome. The protein resides in the synaptic cell membrane. Its subcellular location is the cytoplasmic vesicle. It is found in the perikaryon. The protein localises to the cell projection. It localises to the dendrite. The protein resides in the apical cell membrane. It carries out the reaction K(+)(in) = K(+)(out). The enzyme catalyses NH4(+)(in) = NH4(+)(out). The catalysed reaction is Na(+)(in) = Na(+)(out). It catalyses the reaction Rb(+)(in) = Rb(+)(out). It carries out the reaction Cs(+)(in) = Cs(+)(out). The enzyme catalyses Li(+)(in) = Li(+)(out). The catalysed reaction is L-glutamate(out) = L-glutamate(in). It catalyses the reaction chloride(in) = chloride(out). Functionally, ion channel that contributes to passive transmembrane potassium transport and to the regulation of the resting membrane potential in brain astrocytes, but also in kidney and in other tissues. Forms dimeric channels through which potassium ions pass in accordance with their electrochemical gradient. The channel is selective for K(+) ions at physiological potassium concentrations and at neutral pH, but becomes permeable to Na(+) at subphysiological K(+) levels, and upon acidification of the extracellular medium. The homodimer has very low potassium channel activity, when expressed in heterologous systems, and can function as weakly inward rectifying potassium channel. Channel activity is modulated by activation of serotonin receptors. Heterodimeric channels containing KCNK1 and KCNK2 have much higher activity, and may represent the predominant form in astrocytes. Heterodimeric channels containing KCNK1 and KCNK3 or KCNK9 have much higher activity. Heterodimeric channels formed by KCNK1 and KCNK9 may contribute to halothane-sensitive currents. Mediates outward rectifying potassium currents in dentate gyrus granule cells and contributes to the regulation of their resting membrane potential. Contributes to the regulation of action potential firing in dentate gyrus granule cells and down-regulates their intrinsic excitability. In astrocytes, the heterodimer formed by KCNK1 and KCNK2 is required for rapid glutamate release in response to activation of G-protein coupled receptors, such as F2R and CNR1. Required for normal ion and water transport in the kidney. Contributes to the regulation of the resting membrane potential of pancreatic beta cells. The low channel activity of homodimeric KCNK1 may be due to sumoylation. The low channel activity may be due to rapid internalization from the cell membrane and retention in recycling endosomes. Permeable to monovalent cations with ion selectivity for K(+) &gt; Rb(+) &gt;&gt; NH4(+) &gt;&gt; Cs(+) = Na(+) = Li(+). The chain is Potassium channel subfamily K member 1 from Pongo abelii (Sumatran orangutan).